The sequence spans 737 residues: uncharacterized protein (737 aa).

7 helical membrane passes run Leu-11–Leu-31, Glu-36–Phe-56, Trp-60–Tyr-80, Thr-118–Tyr-138, Ile-142–Tyr-162, Ala-164–Leu-184, and Val-200–Ala-220. The segment at Pro-556–His-611 is disordered. Over residues Lys-581–Val-603 the composition is skewed to basic and acidic residues. Residues Leu-618 to Phe-638 form a helical membrane-spanning segment.

The protein resides in the cell membrane. This is an uncharacterized protein from Bacillus subtilis (strain 168).